Consider the following 747-residue polypeptide: Polyribonucleotide nucleotidyltransferase (747 aa).

Mg(2+) contacts are provided by aspartate 502 and aspartate 508. The region spanning 569 to 628 (PRMLTITIDPDKIRDIIGPGGKIIKKIIEETGVEIDVEDDGRVFIASTDAAAGERALKII) is the KH domain. In terms of domain architecture, S1 motif spans 638-712 (GKVYNGKVTR…PQGRLKLSRK (75 aa)). The segment at 718–747 (STVGEGGHRHFRRAGREGGHRGLNNRRQSR) is disordered.

It belongs to the polyribonucleotide nucleotidyltransferase family. Mg(2+) serves as cofactor.

The protein localises to the cytoplasm. The catalysed reaction is RNA(n+1) + phosphate = RNA(n) + a ribonucleoside 5'-diphosphate. Its function is as follows. Involved in mRNA degradation. Catalyzes the phosphorolysis of single-stranded polyribonucleotides processively in the 3'- to 5'-direction. The sequence is that of Polyribonucleotide nucleotidyltransferase from Moorella thermoacetica (strain ATCC 39073 / JCM 9320).